A 354-amino-acid chain; its full sequence is tRNA N6-adenosine threonylcarbamoyltransferase (354 aa).

Residues His-111 and His-115 each coordinate Fe cation. Residues 134 to 138 (LVSGG), Asp-167, Gly-180, and Asn-279 contribute to the substrate site. Fe cation is bound at residue Asp-319.

The protein belongs to the KAE1 / TsaD family. Fe(2+) is required as a cofactor.

It localises to the cytoplasm. The catalysed reaction is L-threonylcarbamoyladenylate + adenosine(37) in tRNA = N(6)-L-threonylcarbamoyladenosine(37) in tRNA + AMP + H(+). Its function is as follows. Required for the formation of a threonylcarbamoyl group on adenosine at position 37 (t(6)A37) in tRNAs that read codons beginning with adenine. Is involved in the transfer of the threonylcarbamoyl moiety of threonylcarbamoyl-AMP (TC-AMP) to the N6 group of A37, together with TsaE and TsaB. TsaD likely plays a direct catalytic role in this reaction. The polypeptide is tRNA N6-adenosine threonylcarbamoyltransferase (Neisseria meningitidis).